The following is a 469-amino-acid chain: ATP-dependent protease ATPase subunit HslU (469 aa).

ATP contacts are provided by residues Ile-24 and 66 to 71 (GVGKTE). The disordered stretch occupies residues 159–179 (LFGSMNQPDEPAEEEVDQELK). Asp-282, Glu-347, and Arg-419 together coordinate ATP.

It belongs to the ClpX chaperone family. HslU subfamily. In terms of assembly, a double ring-shaped homohexamer of HslV is capped on each side by a ring-shaped HslU homohexamer. The assembly of the HslU/HslV complex is dependent on binding of ATP.

The protein resides in the cytoplasm. Its function is as follows. ATPase subunit of a proteasome-like degradation complex; this subunit has chaperone activity. The binding of ATP and its subsequent hydrolysis by HslU are essential for unfolding of protein substrates subsequently hydrolyzed by HslV. HslU recognizes the N-terminal part of its protein substrates and unfolds these before they are guided to HslV for hydrolysis. The sequence is that of ATP-dependent protease ATPase subunit HslU from Listeria innocua serovar 6a (strain ATCC BAA-680 / CLIP 11262).